Consider the following 641-residue polypeptide: Packaging protein UL32 homolog (641 aa).

Zn(2+)-binding residues include Cys101, Cys104, His181, Cys187, Cys467, Cys470, His540, and Cys547. Zinc finger regions lie at residues 101–187 (CLVC…LHGC) and 467–547 (CLLC…DPMC).

This sequence belongs to the herpesviridae UL32 protein family.

It is found in the host cytoplasm. It localises to the host nucleus. Functionally, plays a role in efficient localization of neo-synthesized capsids to nuclear replication compartments, thereby controlling cleavage and packaging of virus genomic DNA. The polypeptide is Packaging protein UL32 homolog (MDV046) (Gallus gallus (Chicken)).